Consider the following 166-residue polypeptide: Cyanate hydratase (166 aa).

Active-site residues include Arg106, Glu109, and Ser132.

This sequence belongs to the cyanase family.

It catalyses the reaction cyanate + hydrogencarbonate + 3 H(+) = NH4(+) + 2 CO2. Catalyzes the reaction of cyanate with bicarbonate to produce ammonia and carbon dioxide. This Verticillium alfalfae (strain VaMs.102 / ATCC MYA-4576 / FGSC 10136) (Verticillium wilt of alfalfa) protein is Cyanate hydratase.